The primary structure comprises 666 residues: Tripartite terminase subunit 3 (666 aa).

A Walker A motif motif is present at residues 208–215 (VPRRHGKT). Residues 300-305 (LLIVDE) carry the Walker B motif motif. Glu-305 serves as the catalytic For ATPase activity. Catalysis depends on for nuclease activity residues Asp-458, Glu-529, and Asp-643.

This sequence belongs to the herpesviridae TRM3 protein family. Interacts with the terminase subunits TRM1 and TRM2. Interacts with portal protein.

It is found in the host nucleus. Its function is as follows. Component of the molecular motor that translocates viral genomic DNA in empty capsid during DNA packaging. Forms a tripartite terminase complex together with TRM1 and TRM2 in the host cytoplasm. Once the complex reaches the host nucleus, it interacts with the capsid portal vertex. This portal forms a ring in which genomic DNA is translocated into the capsid. TRM3 carries an RNase H-like nuclease activity that plays an important role for the cleavage of concatemeric viral DNA into unit length genomes. The polypeptide is Tripartite terminase subunit 3 (Homo sapiens (Human)).